Here is a 600-residue protein sequence, read N- to C-terminus: 1-deoxy-D-xylulose-5-phosphate synthase (600 aa).

Thiamine diphosphate-binding positions include H63 and 104–106 (GHS). Residue D135 coordinates Mg(2+). Thiamine diphosphate-binding positions include 136–137 (GA), N164, Y271, and E352. N164 lines the Mg(2+) pocket.

This sequence belongs to the transketolase family. DXPS subfamily. As to quaternary structure, homodimer. Mg(2+) is required as a cofactor. The cofactor is thiamine diphosphate.

It carries out the reaction D-glyceraldehyde 3-phosphate + pyruvate + H(+) = 1-deoxy-D-xylulose 5-phosphate + CO2. It participates in metabolic intermediate biosynthesis; 1-deoxy-D-xylulose 5-phosphate biosynthesis; 1-deoxy-D-xylulose 5-phosphate from D-glyceraldehyde 3-phosphate and pyruvate: step 1/1. Its function is as follows. Catalyzes the acyloin condensation reaction between C atoms 2 and 3 of pyruvate and glyceraldehyde 3-phosphate to yield 1-deoxy-D-xylulose-5-phosphate (DXP). This Campylobacter fetus subsp. fetus (strain 82-40) protein is 1-deoxy-D-xylulose-5-phosphate synthase.